Here is a 595-residue protein sequence, read N- to C-terminus: DNA damage-binding protein CMR1 (595 aa).

The tract at residues 20–79 (ALLDSLGLDPAGASSPFGSSPAPTSNKTKPKPKPAPKKRKAAAVIAVDEGPRRRSGRIAG) is disordered. The segment covering 29-46 (PAGASSPFGSSPAPTSNK) has biased composition (low complexity). A compositionally biased stretch (basic residues) spans 47–60 (TKPKPKPAPKKRKA). 4 WD repeats span residues 185 to 226 (VTNE…MEKP), 255 to 297 (HAKN…ELFS), 300 to 339 (DEDL…RESG), and 349 to 389 (GRGA…SISS). The tract at residues 397-429 (AIEEEEEGTSTLSGQSSSLPHDTHPTRESDYST) is disordered. Over residues 405–415 (TSTLSGQSSSL) the composition is skewed to low complexity. Residues 417 to 426 (HDTHPTRESD) are compositionally biased toward basic and acidic residues. 3 WD repeats span residues 448–487 (QHGK…SLVD), 519–556 (LRAQ…VGLW), and 558–595 (DDVT…GDHI).

This sequence belongs to the WD repeat DDB2/WDR76 family.

Its function is as follows. DNA-binding protein that binds to both single- and double-stranded DNA. Binds preferentially to UV-damaged DNA. May be involved in DNA-metabolic processes. This chain is DNA damage-binding protein CMR1, found in Cryptococcus neoformans var. neoformans serotype D (strain B-3501A) (Filobasidiella neoformans).